The sequence spans 102 residues: NADH-quinone oxidoreductase subunit K (102 aa).

The next 3 helical transmembrane spans lie at 6–26 (LEHG…GLMV), 30–50 (ILFV…AFVV), and 62–82 (VMFI…LAIL).

This sequence belongs to the complex I subunit 4L family. In terms of assembly, NDH-1 is composed of 13 different subunits. Subunits NuoA, H, J, K, L, M, N constitute the membrane sector of the complex.

The protein localises to the cell inner membrane. It carries out the reaction a quinone + NADH + 5 H(+)(in) = a quinol + NAD(+) + 4 H(+)(out). Functionally, NDH-1 shuttles electrons from NADH, via FMN and iron-sulfur (Fe-S) centers, to quinones in the respiratory chain. The immediate electron acceptor for the enzyme in this species is believed to be ubiquinone. Couples the redox reaction to proton translocation (for every two electrons transferred, four hydrogen ions are translocated across the cytoplasmic membrane), and thus conserves the redox energy in a proton gradient. This Pseudomonas syringae pv. tomato (strain ATCC BAA-871 / DC3000) protein is NADH-quinone oxidoreductase subunit K.